Here is a 386-residue protein sequence, read N- to C-terminus: Succinate--CoA ligase [ADP-forming] subunit beta (386 aa).

Positions 9-244 (KAVLRSYGVS…LEEEDSKEIE (236 aa)) constitute an ATP-grasp domain. ATP is bound by residues Lys46, 53–55 (GRG), Glu99, Cys102, and Glu107. The Mg(2+) site is built by Asn199 and Asp213. Residues Asn264 and 321-323 (GIM) each bind substrate.

It belongs to the succinate/malate CoA ligase beta subunit family. Heterotetramer of two alpha and two beta subunits. Requires Mg(2+) as cofactor.

The enzyme catalyses succinate + ATP + CoA = succinyl-CoA + ADP + phosphate. The catalysed reaction is GTP + succinate + CoA = succinyl-CoA + GDP + phosphate. It functions in the pathway carbohydrate metabolism; tricarboxylic acid cycle; succinate from succinyl-CoA (ligase route): step 1/1. Functionally, succinyl-CoA synthetase functions in the citric acid cycle (TCA), coupling the hydrolysis of succinyl-CoA to the synthesis of either ATP or GTP and thus represents the only step of substrate-level phosphorylation in the TCA. The beta subunit provides nucleotide specificity of the enzyme and binds the substrate succinate, while the binding sites for coenzyme A and phosphate are found in the alpha subunit. The polypeptide is Succinate--CoA ligase [ADP-forming] subunit beta (Bacillus mycoides (strain KBAB4) (Bacillus weihenstephanensis)).